A 93-amino-acid chain; its full sequence is Small ribosomal subunit protein uS19 (93 aa).

This sequence belongs to the universal ribosomal protein uS19 family.

In terms of biological role, protein S19 forms a complex with S13 that binds strongly to the 16S ribosomal RNA. The sequence is that of Small ribosomal subunit protein uS19 from Microcystis aeruginosa (strain NIES-843 / IAM M-2473).